The following is a 64-amino-acid chain: Large ribosomal subunit protein bL35 (64 aa).

This sequence belongs to the bacterial ribosomal protein bL35 family.

The chain is Large ribosomal subunit protein bL35 from Amoebophilus asiaticus (strain 5a2).